The primary structure comprises 403 residues: Accessory Sec system protein translocase subunit SecY2 (403 aa).

10 consecutive transmembrane segments (helical) span residues 17 to 37 (MLYT…SIVS), 63 to 83 (LNIF…LMLI), 105 to 125 (ILTL…YVSK), 131 to 151 (DNIY…VWLA), 157 to 177 (YGIA…MMHQ), 186 to 206 (HIVI…LLFI), 240 to 260 (ITLM…HFIL), 276 to 296 (FDSP…GYFL), 339 to 359 (WFGS…TLFV), and 366 to 386 (IYFS…AETI).

Belongs to the SecY/SEC61-alpha family. SecY2 subfamily. In terms of assembly, component of the accessory SecA2/SecY2 protein translocase complex required to export cell wall proteins. May form heterotrimers with SecE and SecG subunits.

Its subcellular location is the cell membrane. Functionally, part of the accessory SecA2/SecY2 system specifically required for export of possible cell wall proteins. The central subunit of a protein translocation channel. This chain is Accessory Sec system protein translocase subunit SecY2, found in Staphylococcus aureus (strain N315).